Reading from the N-terminus, the 387-residue chain is UDP-N-acetylglucosamine--N-acetylmuramyl-(pentapeptide) pyrophosphoryl-undecaprenol N-acetylglucosamine transferase (387 aa).

Residues 23–25, Asn135, Arg174, Ser203, Ile261, 280–285, and Gln306 contribute to the UDP-N-acetyl-alpha-D-glucosamine site; these read TGG and ALTVSE.

It belongs to the glycosyltransferase 28 family. MurG subfamily.

It localises to the cell inner membrane. It catalyses the reaction di-trans,octa-cis-undecaprenyl diphospho-N-acetyl-alpha-D-muramoyl-L-alanyl-D-glutamyl-meso-2,6-diaminopimeloyl-D-alanyl-D-alanine + UDP-N-acetyl-alpha-D-glucosamine = di-trans,octa-cis-undecaprenyl diphospho-[N-acetyl-alpha-D-glucosaminyl-(1-&gt;4)]-N-acetyl-alpha-D-muramoyl-L-alanyl-D-glutamyl-meso-2,6-diaminopimeloyl-D-alanyl-D-alanine + UDP + H(+). It participates in cell wall biogenesis; peptidoglycan biosynthesis. Its function is as follows. Cell wall formation. Catalyzes the transfer of a GlcNAc subunit on undecaprenyl-pyrophosphoryl-MurNAc-pentapeptide (lipid intermediate I) to form undecaprenyl-pyrophosphoryl-MurNAc-(pentapeptide)GlcNAc (lipid intermediate II). The protein is UDP-N-acetylglucosamine--N-acetylmuramyl-(pentapeptide) pyrophosphoryl-undecaprenol N-acetylglucosamine transferase of Colwellia psychrerythraea (strain 34H / ATCC BAA-681) (Vibrio psychroerythus).